Reading from the N-terminus, the 86-residue chain is Putative protein adenylyltransferase MJ1215 (86 aa).

The short motif at 35–49 is the GSX(10)DXD motif element; sequence GSYARGEQKETSDID. 3 residues coordinate Mg(2+): D47, D49, and D79.

This sequence belongs to the MntA antitoxin family. Probably forms a complex with cognate toxin MJ1216. Requires Mg(2+) as cofactor.

The catalysed reaction is L-tyrosyl-[protein] + ATP = O-(5'-adenylyl)-L-tyrosyl-[protein] + diphosphate. It catalyses the reaction O-(5'-adenylyl)-L-tyrosyl-[protein] + ATP = O-[5'-(adenylyl-(5'-&gt;3')-adenylyl)]-L-tyrosyl-[protein] + diphosphate. Its function is as follows. Probable antitoxin component of a putative type VII toxin-antitoxin (TA) system. Neutralizes cognate toxic MJ1216 by di-AMPylation. The sequence is that of Putative protein adenylyltransferase MJ1215 from Methanocaldococcus jannaschii (strain ATCC 43067 / DSM 2661 / JAL-1 / JCM 10045 / NBRC 100440) (Methanococcus jannaschii).